Consider the following 72-residue polypeptide: Probable neurotoxin pcD-993 (72 aa).

A signal peptide spans 1 to 19 (MNYLVMISFALLLVIGVES). Positions 21-72 (RDGYFVEPDNCVVHCMPSSEMCDRGCKHNGATSGSCKAFSKGGNACWCKGLR) constitute an LCN-type CS-alpha/beta domain. Cystine bridges form between C35-C56, C42-C66, and C46-C68. A propeptide (removed by a carboxypeptidase) is located at residue R72.

The protein belongs to the long (3 C-C) scorpion toxin superfamily. Expressed by the venom gland.

It is found in the secreted. In Androctonus australis (Sahara scorpion), this protein is Probable neurotoxin pcD-993.